A 143-amino-acid polypeptide reads, in one-letter code: Large ribosomal subunit protein uL15 (143 aa).

The tract at residues 1-54 (MELNSIKPADGAKHAARRVGRGIGSGLGKTAGRGHKGQKSRSGGYHKVGFEGGQ) is disordered. Gly residues predominate over residues 21 to 31 (RGIGSGLGKTA).

It belongs to the universal ribosomal protein uL15 family. In terms of assembly, part of the 50S ribosomal subunit.

Functionally, binds to the 23S rRNA. In Acidovorax ebreus (strain TPSY) (Diaphorobacter sp. (strain TPSY)), this protein is Large ribosomal subunit protein uL15.